The following is a 285-amino-acid chain: Dihydropteroate synthase (285 aa).

A Pterin-binding domain is found at 18-276 (PKIMGIVNLT…DVKATADALK (259 aa)). Asn-25 is a Mg(2+) binding site. (7,8-dihydropterin-6-yl)methyl diphosphate is bound by residues Thr-66, Asp-99, Asn-119, Asp-190, Lys-229, and 264-266 (RVH).

Belongs to the DHPS family. In terms of assembly, homodimer. It depends on Mg(2+) as a cofactor.

It catalyses the reaction (7,8-dihydropterin-6-yl)methyl diphosphate + 4-aminobenzoate = 7,8-dihydropteroate + diphosphate. Its pathway is cofactor biosynthesis; tetrahydrofolate biosynthesis; 7,8-dihydrofolate from 2-amino-4-hydroxy-6-hydroxymethyl-7,8-dihydropteridine diphosphate and 4-aminobenzoate: step 1/2. In terms of biological role, catalyzes the condensation of para-aminobenzoate (pABA) with 6-hydroxymethyl-7,8-dihydropterin diphosphate (DHPt-PP) to form 7,8-dihydropteroate (H2Pte), the immediate precursor of folate derivatives. The sequence is that of Dihydropteroate synthase (folP) from Neisseria meningitidis serogroup B (strain ATCC BAA-335 / MC58).